Consider the following 190-residue polypeptide: Frizzled-6 (190 aa).

The FZ domain maps to 1–20; sequence FGFAWPEELECSRLVNCDET. Topologically, residues 1 to 89 are extracellular; it reads FGFAWPEELE…NYELDVAKSF (89 aa). Residues 90-110 form a helical membrane-spanning segment; the sequence is IGIVSIFCLCATLFTFLTFLI. Residues 111–121 are Cytoplasmic-facing; sequence DVKRFRYPERP. The chain crosses the membrane as a helical span at residues 122–142; that stretch reads IIYYSVCYSIVSLMYFIGFLL. Residues 143–169 are Extracellular-facing; sequence GNRTACNKADDKLEIGETVVLGSQNKA. Asn-144 is a glycosylation site (N-linked (GlcNAc...) asparagine). The helical transmembrane segment at 170–190 threads the bilayer; sequence CTVLFMVLYFFTMAGTIWWVI.

This sequence belongs to the G-protein coupled receptor Fz/Smo family.

The protein resides in the membrane. It is found in the cell membrane. Its subcellular location is the cell surface. The protein localises to the apical cell membrane. It localises to the cytoplasmic vesicle membrane. In terms of biological role, receptor for Wnt proteins. Most of frizzled receptors are coupled to the beta-catenin canonical signaling pathway, which leads to the activation of disheveled proteins, inhibition of GSK-3 kinase, nuclear accumulation of beta-catenin and activation of Wnt target genes. A second signaling pathway involving PKC and calcium fluxes has been seen for some family members, but it is not yet clear if it represents a distinct pathway or if it can be integrated in the canonical pathway, as PKC seems to be required for Wnt-mediated inactivation of GSK-3 kinase. Both pathways seem to involve interactions with G-proteins. Activation by Wnt5A stimulates PKC activity via a G-protein-dependent mechanism. Involved in transduction and intercellular transmission of polarity information during tissue morphogenesis and/or in differentiated tissues. Together with FZD3, may be involved in the neural tube closure and plays a role in the regulation of the establishment of planar cell polarity (PCP), particularly in the orientation of asymmetric bundles of stereocilia on the apical faces of a subset of auditory and vestibular sensory cells located in the inner ear. The sequence is that of Frizzled-6 (FZD6) from Gallus gallus (Chicken).